The following is a 170-amino-acid chain: UPF0251 protein MA_1017 (170 aa).

It belongs to the UPF0251 family.

The protein is UPF0251 protein MA_1017 of Methanosarcina acetivorans (strain ATCC 35395 / DSM 2834 / JCM 12185 / C2A).